The following is a 161-amino-acid chain: PRS fimbrial major pilin protein (161 aa).

Belongs to the fimbrial protein family.

The protein localises to the secreted. Its subcellular location is the fimbrium. In terms of biological role, fimbriae (also called pili), polar filaments radiating from the surface of the bacterium to a length of 0.5-1.5 micrometers and numbering 100-300 per cell, enable bacteria to colonize the epithelium of specific host organs. The polypeptide is PRS fimbrial major pilin protein (prsA) (Escherichia coli).